The chain runs to 305 residues: Tetraspanin-12 (305 aa).

At 1 to 12 the chain is on the cytoplasmic side; it reads MAREDSVKCLRC. S-palmitoyl cysteine attachment occurs at residues C9 and C12. The chain crosses the membrane as a helical span at residues 13–33; the sequence is LLYALNLLFWLMSISVLAVSA. Residues 34–59 are Extracellular-facing; it reads WMRDYLNNVLTLTAETRVEEAVILTY. A helical transmembrane segment spans residues 60–80; it reads FPVVHPVMIAVCCFLIIVGML. C83 carries S-palmitoyl cysteine lipidation. A helical transmembrane segment spans residues 90 to 110; it reads LLLLAWYFGTLLVIFCVELAC. Topologically, residues 111–224 are extracellular; that stretch reads GVWTYEQEVM…RGTKQLQVLR (114 aa). A helical membrane pass occupies residues 225 to 245; sequence FLGISIGVTQILAMILTITLL. At 246–305 the chain is on the cytoplasmic side; sequence WALYYDRREPGTDQMLSLKNDASQHLSCHSVELLKPSLSRIFEHTSMANSFNTHFEMEEL.

The protein belongs to the tetraspanin (TM4SF) family. As to quaternary structure, component of a complex, at least composed of TSPAN12, FZD4 and norrin (NDP). Interacts (when palmitoylated) with ADAM10. Interacts with MMP14/MT1-MMP. In terms of processing, palmitoylated; required for interaction with ADAM10. The precise position of palmitoylated residues is unclear and occurs either on Cys-9, Cys-12 and/or Cys-83.

The protein localises to the cell membrane. In terms of biological role, regulator of cell surface receptor signal transduction. Plays a central role in retinal vascularization by regulating norrin (NDP) signal transduction. Acts in concert with norrin (NDP) to promote FZD4 multimerization and subsequent activation of FZD4, leading to promote accumulation of beta-catenin (CTNNB1) and stimulate LEF/TCF-mediated transcriptional programs. Suprisingly, it only activates the norrin (NDP)-dependent activation of FZD4, while it does not activate the Wnt-dependent activation of FZD4, suggesting the existence of a Wnt-independent signaling that also promote accumulation the beta-catenin (CTNNB1). Acts as a regulator of membrane proteinases such as ADAM10 and MMP14/MT1-MMP. Activates ADAM10-dependent cleavage activity of amyloid precursor protein (APP). Activates MMP14/MT1-MMP-dependent cleavage activity. The protein is Tetraspanin-12 (Tspan12) of Rattus norvegicus (Rat).